The sequence spans 787 residues: Lysine-specific demethylase JMJ13 (787 aa).

The JmjN domain occupies 103–144 (CPVYRPTKEEFEDPLTYLQKIFPEASKYGICKIVSPLTATVP). Residues 250 to 420 (SSKWNLNKVS…FGAIASCRYA (171 aa)) enclose the JmjC domain. His293, Glu295, and His388 together coordinate Fe cation. Residues Cys500, Cys503, Cys514, Cys516, His519, Cys522, His525, and Cys534 each coordinate Zn(2+). Residues 500–551 (CSLCKRDCYLAFINCECYSHPVCLRHDVKKLDLPCGTTHTLYLRDNIEDMEA) form a C4HCHC zinc finger. A C5HC2 zinc finger spans residues 500–551 (CSLCKRDCYLAFINCECYSHPVCLRHDVKKLDLPCGTTHTLYLRDNIEDMEA). The FYR N-terminal domain occupies 617-675 (VMSYEANASCISSVADDYECSDYVNRRANCSSSSDSKLSEEVACSSSKKTRFFPVVQDE). The FYR C-terminal domain maps to 677-756 (LVADQESDGS…ELVISNRKET (80 aa)). Residues 712–769 (ESDHHQELKRLKKSHHHEGRYSSSSSVSRQEEEEDELVISNRKETQQQSDVKMQKKRI) are disordered. The Nuclear localization signal motif lies at 752-759 (NRKETQQQ).

It belongs to the JARID1 histone demethylase family. Fe(2+) serves as cofactor. As to expression, mostly expressed in leaves, and, to a lower extent, in inflorescences, roots, siliques and stems.

The protein resides in the nucleus. It catalyses the reaction N(6),N(6),N(6)-trimethyl-L-lysyl(27)-[histone H3] + 2-oxoglutarate + O2 = N(6),N(6)-dimethyl-L-lysyl(27)-[histone H3] + formaldehyde + succinate + CO2. In terms of biological role, histone demethylase that demethylates 'Lys-27' (H3K27me) of histone H3 with a specific activity for H3K27me3 and involved in the regulation of gene expression. Acts as a temperature and photoperiod dependent flowering repressor. The sequence is that of Lysine-specific demethylase JMJ13 from Arabidopsis thaliana (Mouse-ear cress).